We begin with the raw amino-acid sequence, 139 residues long: MAVCIAVIAKENYPLYIRSTPTESELKFHYMVHTSLDVVDEKISAMGKALVDQRELYLGLLYPTEDYKVYGYVTNSKVKFVMVVDSSNTALRDNEIRSMFRKLHNSYTDVMCNPFYNPGDRIQSRAFDTMVTSMMIQVC.

This sequence belongs to the TRAPP small subunits family. Sedlin subfamily. In terms of assembly, component of the multisubunit TRAPP (transport protein particle) complex, which includes at least TRAPPC2, TRAPPC2L, TRAPPC3, TRAPPC3L, TRAPPC4, TRAPPC5, TRAPPC8, TRAPPC9, TRAPPC10, TRAPPC11 and TRAPPC12. Interacts with the heterodimer TRAPPC3-TRAPPC6A.

The protein resides in the cytoplasm. It localises to the perinuclear region. Its subcellular location is the endoplasmic reticulum. The protein localises to the golgi apparatus. In terms of biological role, may play a role in vesicular transport from endoplasmic reticulum to Golgi. This is Trafficking protein particle complex subunit 2-like protein (Trappc2l) from Mus musculus (Mouse).